Reading from the N-terminus, the 314-residue chain is Methionyl-tRNA formyltransferase (314 aa).

109–112 (SVLP) lines the (6S)-5,6,7,8-tetrahydrofolate pocket.

The protein belongs to the Fmt family.

The enzyme catalyses L-methionyl-tRNA(fMet) + (6R)-10-formyltetrahydrofolate = N-formyl-L-methionyl-tRNA(fMet) + (6S)-5,6,7,8-tetrahydrofolate + H(+). In terms of biological role, attaches a formyl group to the free amino group of methionyl-tRNA(fMet). The formyl group appears to play a dual role in the initiator identity of N-formylmethionyl-tRNA by promoting its recognition by IF2 and preventing the misappropriation of this tRNA by the elongation apparatus. This chain is Methionyl-tRNA formyltransferase, found in Dictyoglomus turgidum (strain DSM 6724 / Z-1310).